The primary structure comprises 122 residues: MSQIYFTQDHEWLSVEGQVVTVGITNYAQEQLGDLVFVDLPQSGTKLSKGDAAAVVESVKAASDVYAPLDGEVVEINEALANSPELVNQKAEKEGWLWKMTVQDETQLEGLLDEAAYKTLIG.

The Lipoyl-binding domain occupies 19 to 101 (VVTVGITNYA…EKEGWLWKMT (83 aa)). The residue at position 60 (Lys-60) is an N6-lipoyllysine.

Belongs to the GcvH family. In terms of assembly, the glycine cleavage system is composed of four proteins: P, T, L and H. (R)-lipoate serves as cofactor.

The glycine cleavage system catalyzes the degradation of glycine. The H protein shuttles the methylamine group of glycine from the P protein to the T protein. This chain is Glycine cleavage system H protein, found in Bartonella quintana (strain Toulouse) (Rochalimaea quintana).